We begin with the raw amino-acid sequence, 321 residues long: Olfactory receptor 3A2 (321 aa).

At 1–35 (MSLQKLMEPEAGTNRTAVAEFILLGLVQTEEMQPV) the chain is on the extracellular side. Asn14 is a glycosylation site (N-linked (GlcNAc...) asparagine). The helical transmembrane segment at 36 to 58 (VFVLLLFAYLVTTGGNLSILAAV) threads the bilayer. Residues 59–66 (LVEPKLHA) lie on the Cytoplasmic side of the membrane. A helical membrane pass occupies residues 67 to 88 (PMYFFLGNLSVLDVGCITVTVP). The Extracellular segment spans residues 89 to 109 (AMLGRLLSHKSTISYDACLSQ). Cys106 and Cys198 are joined by a disulfide. Residues 110–129 (LFFFHLLAGMDCFLLTAMAY) form a helical membrane-spanning segment. The Cytoplasmic portion of the chain corresponds to 130–149 (DRLLAICQPLTYSTRMSQTV). The helical transmembrane segment at 150–167 (QRMLVAASLACAFTNALT) threads the bilayer. Residues 168–205 (HTVAMSTLNFCGPNEVNHFYCDLPQLFQLSCSSTQLNE) are Extracellular-facing. A helical membrane pass occupies residues 206–229 (LLLFAVGFIMAGTPLVLIITAYSH). At 230-246 (VAAAVLRIRSVEGRKKA) the chain is on the cytoplasmic side. Residues 247–270 (FSTCGSHLTVVCLFFGRGIFNYMR) form a helical membrane-spanning segment. The Extracellular portion of the chain corresponds to 271-281 (LGSEEASDKDK). The chain crosses the membrane as a helical span at residues 282–301 (GVGVFNTVINPMLNPLIYSL). The Cytoplasmic portion of the chain corresponds to 302–321 (RNPDVQGALWQIFLGRRSLT).

The protein belongs to the G-protein coupled receptor 1 family.

It localises to the cell membrane. Its function is as follows. Odorant receptor. In Homo sapiens (Human), this protein is Olfactory receptor 3A2 (OR3A2).